The chain runs to 298 residues: Bifunctional methyltransferase/endonuclease (298 aa).

The interval 1-79 (MQSIDLYSYL…SLGIDEKIRR (79 aa)) is probable methylated-DNA--protein-cysteine methyltransferase. The active site involves C56. The endonuclease V stretch occupies residues 80–298 (LRNDGIEINN…TVALRRNNII (219 aa)). Positions 137 and 197 each coordinate Mg(2+).

In the N-terminal section; belongs to the MGMT family. This sequence in the C-terminal section; belongs to the endonuclease V family. Requires Mg(2+) as cofactor.

It is found in the cytoplasm. The catalysed reaction is Endonucleolytic cleavage at apurinic or apyrimidinic sites to products with a 5'-phosphate.. Functionally, DNA repair enzyme involved in the repair of deaminated bases. Selectively cleaves double-stranded DNA at the second phosphodiester bond 3' to a deoxyinosine leaving behind the intact lesion on the nicked DNA. This Picrophilus torridus (strain ATCC 700027 / DSM 9790 / JCM 10055 / NBRC 100828 / KAW 2/3) protein is Bifunctional methyltransferase/endonuclease.